The chain runs to 266 residues: ATP synthase subunit a (266 aa).

The next 5 helical transmembrane spans lie at 33-53, 95-115, 141-161, 206-226, and 237-257; these read FWTLNIDSMFFSVVLGLLFLA, VIAPLALTVFVWVFLMNLMDL, DVNITLSMALGVFILIIFYSI, LFGNMYAGELIFILIAGLLPW, and AIFHILIITLQAFIFMVLTIV.

This sequence belongs to the ATPase A chain family. F-type ATPases have 2 components, CF(1) - the catalytic core - and CF(0) - the membrane proton channel. CF(1) has five subunits: alpha(3), beta(3), gamma(1), delta(1), epsilon(1). CF(0) has three main subunits: a(1), b(2) and c(9-12). The alpha and beta chains form an alternating ring which encloses part of the gamma chain. CF(1) is attached to CF(0) by a central stalk formed by the gamma and epsilon chains, while a peripheral stalk is formed by the delta and b chains.

It is found in the cell inner membrane. Key component of the proton channel; it plays a direct role in the translocation of protons across the membrane. The polypeptide is ATP synthase subunit a (Klebsiella pneumoniae subsp. pneumoniae (strain ATCC 700721 / MGH 78578)).